A 50-amino-acid polypeptide reads, in one-letter code: Protein hunchback (50 aa).

C2H2-type zinc fingers lie at residues 1-5 (HILKH), 11-33 (IRCPECNYTCVNRSMLTSHMKSH), and 39-50 (YRCLDCNYATKY).

The protein belongs to the hunchback C2H2-type zinc-finger protein family.

Its subcellular location is the nucleus. Gap class segmentation protein that controls development of head structures. The polypeptide is Protein hunchback (hb) (Bradysia coprophila (Dark-winged fungus gnat)).